Reading from the N-terminus, the 524-residue chain is Bifunctional purine biosynthesis protein PurH (524 aa).

In terms of domain architecture, MGS-like spans 1 to 149 (MSDPVIKRAL…KNNESVTVVT (149 aa)).

The protein belongs to the PurH family.

The enzyme catalyses (6R)-10-formyltetrahydrofolate + 5-amino-1-(5-phospho-beta-D-ribosyl)imidazole-4-carboxamide = 5-formamido-1-(5-phospho-D-ribosyl)imidazole-4-carboxamide + (6S)-5,6,7,8-tetrahydrofolate. It catalyses the reaction IMP + H2O = 5-formamido-1-(5-phospho-D-ribosyl)imidazole-4-carboxamide. It participates in purine metabolism; IMP biosynthesis via de novo pathway; 5-formamido-1-(5-phospho-D-ribosyl)imidazole-4-carboxamide from 5-amino-1-(5-phospho-D-ribosyl)imidazole-4-carboxamide (10-formyl THF route): step 1/1. Its pathway is purine metabolism; IMP biosynthesis via de novo pathway; IMP from 5-formamido-1-(5-phospho-D-ribosyl)imidazole-4-carboxamide: step 1/1. The chain is Bifunctional purine biosynthesis protein PurH from Chlorobium chlorochromatii (strain CaD3).